The sequence spans 141 residues: ATP synthase epsilon chain, chloroplastic (141 aa).

This sequence belongs to the ATPase epsilon chain family. F-type ATPases have 2 components, F(1) - the catalytic core - and F(0) - the membrane proton channel. F(1) has five subunits: alpha(3), beta(3), gamma(1), delta(1), epsilon(1). F(0) has four main subunits: a(1), b(1), b'(1) and c(10-14). The alpha and beta chains form an alternating ring which encloses part of the gamma chain. F(1) is attached to F(0) by a central stalk formed by the gamma and epsilon chains, while a peripheral stalk is formed by the delta, b and b' chains.

Its subcellular location is the plastid. The protein localises to the chloroplast thylakoid membrane. Functionally, f(1)F(0) ATP synthase produces ATP from ADP in the presence of a proton or sodium gradient. F-type ATPases consist of two structural domains, F(1) containing the extramembraneous catalytic core and F(0) containing the membrane proton channel, linked together by a central stalk and a peripheral stalk. During catalysis, ATP synthesis in the catalytic domain of F(1) is coupled via a rotary mechanism of the central stalk subunits to proton translocation. The sequence is that of ATP synthase epsilon chain, chloroplastic from Chlamydomonas reinhardtii (Chlamydomonas smithii).